A 648-amino-acid chain; its full sequence is Phosphatidylinositol polyphosphate 5-phosphatase type IV (648 aa).

The tract at residues 1 to 64 is disordered; it reads MPSKSACLRH…PLSMPAKPSN (64 aa). The span at 36-54 shows a compositional bias: polar residues; that stretch reads TSASLPAADSQSSQTNSMP. 2 tandem repeats follow at residues 59–62 and 76–79. Residues 59 to 243 are 4 X 4 AA repeats of P-X-X-P; sequence PAKPSNQNLQ…AHSNLGPSRP (185 aa). The segment at 99-158 is disordered; sequence RFRGSQEDLTVQNGASPCRGSLQDSVAQSPAYSRPLPCLSTSLQEIPKPRRATGSEGGSP. Phosphoserine is present on Ser-103. A compositionally biased stretch (polar residues) spans 120–129; it reads LQDSVAQSPA. Repeat 3 spans residues 147 to 150; sequence PRRA. Thr-197 carries the post-translational modification Phosphothreonine. Copy 4 of the repeat occupies 240 to 243; sequence PSRP. 2 positions are modified to phosphoserine: Ser-245 and Ser-260. Cysteine methyl ester is present on Cys-645. Cys-645 is lipidated: S-farnesyl cysteine. Positions 646–648 are cleaved as a propeptide — removed in mature form; that stretch reads TVS.

Belongs to the inositol 1,4,5-trisphosphate 5-phosphatase type IV family. Interacts (when prenylated) with PDE6D; this is important for normal location in cilia.

It localises to the cytoplasm. The protein localises to the cytoskeleton. It is found in the cilium axoneme. The protein resides in the golgi apparatus. Its subcellular location is the golgi stack membrane. It localises to the cell membrane. The protein localises to the cell projection. It is found in the ruffle. The protein resides in the nucleus. It catalyses the reaction a 1,2-diacyl-sn-glycero-3-phospho-(1D-myo-inositol-4,5-bisphosphate) + H2O = a 1,2-diacyl-sn-glycero-3-phospho-(1D-myo-inositol 4-phosphate) + phosphate. The catalysed reaction is a 1,2-diacyl-sn-glycero-3-phospho-(1D-myo-inositol-3,4,5-trisphosphate) + H2O = a 1,2-diacyl-sn-glycero-3-phospho-(1D-myo-inositol-3,4-bisphosphate) + phosphate. The enzyme catalyses a 1,2-diacyl-sn-glycero-3-phospho-(1D-myo-inositol-3,5-bisphosphate) + H2O = a 1,2-diacyl-sn-glycero-3-phospho-(1D-myo-inositol-3-phosphate) + phosphate. Its function is as follows. Phosphatidylinositol (PtdIns) phosphatase that specifically hydrolyzes the 5-phosphate of phosphatidylinositol-3,4,5-trisphosphate (PtdIns(3,4,5)P3), phosphatidylinositol 4,5-bisphosphate PtdIns (4,5)P2 and phosphatidylinositol 3,5-bisphosphate (PtdIns(3,5)P2). Specific for lipid substrates, inactive towards water soluble inositol phosphates. Plays an essential role in the primary cilium by controlling ciliary growth and phosphoinositide 3-kinase (PI3K) signaling and stability. In Rattus norvegicus (Rat), this protein is Phosphatidylinositol polyphosphate 5-phosphatase type IV (Inpp5e).